A 488-amino-acid polypeptide reads, in one-letter code: E3 ubiquitin-protein ligase TRIM34 (488 aa).

An RING-type zinc finger spans residues 15-60 (CPICLELLTEPLSLDCGHSLCRACITVSNKEAVTSMGGKSSCPVCG). The B box-type zinc finger occupies 92-134 (KKRDLCDHHGEKLLLFCKEDRKVICWLCERSQEHRGHHTVLTE). Zn(2+) contacts are provided by Cys97, His100, Cys119, and His125. A coiled-coil region spans residues 131–239 (VLTEEVFKEC…VRELISDVEC (109 aa)). The B30.2/SPRY domain occupies 283-488 (LSRMLQMFRE…APMTLCPPSS (206 aa)).

Belongs to the TRIM/RBCC family. As to quaternary structure, homotrimer. Interacts (via B-box and SPRY domain) with TRIM5. (Microbial infection) Interacts (via the B30.2/SPRY domain) with HIV-1 capsid complexes. Is the most abundant form. It is highly expressed in the placenta, spleen, colon and peripheral blood leukocytes.

It is found in the cytoplasm. The protein localises to the mitochondrion. It catalyses the reaction S-ubiquitinyl-[E2 ubiquitin-conjugating enzyme]-L-cysteine + [acceptor protein]-L-lysine = [E2 ubiquitin-conjugating enzyme]-L-cysteine + N(6)-ubiquitinyl-[acceptor protein]-L-lysine.. It functions in the pathway protein modification; protein ubiquitination. In terms of biological role, functions as antiviral protein and contributes to the defense against retroviral infections. Acts as a capsid-specific restriction factor with the help of TRIM5 and prevents infection from non-host-adapted retroviruses. During influenza A virus infection, promotes programmed cell death by targeting ZBP1 for 'Lys-63'-linked polyubiquitination. In turn, promotes ZBP1 recruitment of RIPK3 to mediate virus-induced programmed necrosis. Negatively regulates the function of mitochondria by enhancing mitochondrial depolarization leading to cytochrome c release and mitochondria-dependent apoptosis. Also promotes the formation of multinucleated giant cells by means of cell fusion and phagocytosis in epithelial cells. This Homo sapiens (Human) protein is E3 ubiquitin-protein ligase TRIM34 (TRIM34).